The sequence spans 895 residues: MSAVPEQILGASSANDADPQETHEWLDALQGVLAAEGPARAAFLIDKQIEYARVNGVTQPFHAETQYINTIPVEQQARIPGDQDIEHRIRSYTRWNAMAMVLRANKHTNVGGHISSFASAATLYDVGYNHFWRAPSEAGGGDLVFVQGHSAPGVYSRAFLLGRLTQDQLDNFRQEVDGKGISSYPHPWLMPDFWQFPTVSMGLGPIMAIYQARFMKYLDSRGLAKAGDRKVWAFLGDGETDEPESLGAIGMAGREKLDNLVFVINCNLQRLDGPVRGNGKIIQELESEFRGAGWNVIKVVWGSKWDSLLARDTKGLLMKRMMECVDGEYQTMKAKDGAYVREHFFNTPELKAMVADWSDDDIWRLNRGGHDPHKIYAAYKAASEHKGQPTLILAKTIKGYGMGDAGQAMNVAHQQKKMPVDAIRKFRDQFNLPVADDQLEEVPYITFPEGSKELEYMRQARQNLGGYLPARRQKAEALPVPQLSAFDALLKATGEGREVSTTMAFVRILNTLLKDKQIGKHVVPIVPDESRTFGMEGLFRQVGIWNQEGQKYVPEDHDQLMFYKESQTGQVLQEGINEAGAMCDWIAAATSYSTHGVQMIPFYIYYSMFGIQRIGDLCWAAADMRSRGFLLGGTAGRTTLNGEGLQHEDGHSHVFHAAIPNCISYDPTFQYELAVVMQDGLRRMYAEQEDVYYYLTVMNENYEHPEMPAGVEQDIVKGMYQFRKGVENSNAPRVQLLGSGTIFREVIAAADLLKKDWGVESDLWGCPSFTELAREGHDVERFNLLHPTETPRESHVAKSLKSARGPVIASTDYVRAFAEQIRPFVPRRYVVLGTDGFGRSDTREKLRHFFEVDRYWVTLAALKALADEGAIGRDKVAEAIKKYNLDPNKPNPMSV.

A disordered region spans residues 1–20 (MSAVPEQILGASSANDADPQ).

As to quaternary structure, homodimer. Part of the PDH complex, consisting of multiple copies of pyruvate dehydrogenase (E1), dihydrolipoamide acetyltransferase (E2) and lipoamide dehydrogenase (E3). Thiamine diphosphate is required as a cofactor.

It carries out the reaction N(6)-[(R)-lipoyl]-L-lysyl-[protein] + pyruvate + H(+) = N(6)-[(R)-S(8)-acetyldihydrolipoyl]-L-lysyl-[protein] + CO2. Its function is as follows. Component of the pyruvate dehydrogenase (PDH) complex, that catalyzes the overall conversion of pyruvate to acetyl-CoA and CO(2). In Cupriavidus necator (strain ATCC 17699 / DSM 428 / KCTC 22496 / NCIMB 10442 / H16 / Stanier 337) (Ralstonia eutropha), this protein is Pyruvate dehydrogenase E1 component (pdhA).